The sequence spans 403 residues: Sulfate adenylyltransferase (403 aa).

Belongs to the sulfate adenylyltransferase family.

The catalysed reaction is sulfate + ATP + H(+) = adenosine 5'-phosphosulfate + diphosphate. Its pathway is sulfur metabolism; hydrogen sulfide biosynthesis; sulfite from sulfate: step 1/3. This is Sulfate adenylyltransferase from Pelodictyon phaeoclathratiforme (strain DSM 5477 / BU-1).